The chain runs to 389 residues: Iron-sulfur cluster assembly factor IBA57 homolog, mitochondrial (389 aa).

A disordered region spans residues Met1–Ser20. The N-terminal 40 residues, Met1–Arg40, are a transit peptide targeting the mitochondrion. Residues Ala7 to Thr16 are compositionally biased toward basic residues.

Belongs to the GcvT family. CAF17/IBA57 subfamily.

The protein localises to the mitochondrion matrix. The chain is Iron-sulfur cluster assembly factor IBA57 homolog, mitochondrial (CAF17) from Pyricularia oryzae (strain 70-15 / ATCC MYA-4617 / FGSC 8958) (Rice blast fungus).